We begin with the raw amino-acid sequence, 434 residues long: V-type ATP synthase beta chain (434 aa).

It belongs to the ATPase alpha/beta chains family.

Its function is as follows. Produces ATP from ADP in the presence of a proton gradient across the membrane. The V-type beta chain is a regulatory subunit. This Borreliella burgdorferi (strain ATCC 35210 / DSM 4680 / CIP 102532 / B31) (Borrelia burgdorferi) protein is V-type ATP synthase beta chain (atpB).